We begin with the raw amino-acid sequence, 837 residues long: Semaphorin-4B (837 aa).

The N-terminal stretch at 1–43 (MLRTAMGLRSWLAAPWGALPPRPPLLLLLLLLLLLQPPPPTWA) is a signal peptide. The Extracellular portion of the chain corresponds to 44 to 717 (LSPRISLPLG…WGADRSYWKE (674 aa)). The Sema domain occupies 47–523 (RISLPLGSEE…SHSGVVQVPM (477 aa)). Residues Asn69 and Asn96 are each glycosylated (N-linked (GlcNAc...) asparagine). 2 disulfides stabilise this stretch: Cys120–Cys131 and Cys149–Cys158. Residue Asn165 is glycosylated (N-linked (GlcNAc...) asparagine). 2 cysteine pairs are disulfide-bonded: Cys286–Cys399 and Cys310–Cys359. Residues Asn410 and Asn525 are each glycosylated (N-linked (GlcNAc...) asparagine). The 55-residue stretch at 525-579 (NCSLYRSCGDCLLARDPYCAWSGSSCKHVSLYQPQLATRPWIQDIEGASAKDLCS) folds into the PSI domain. Disulfide bonds link Cys526/Cys543 and Cys611/Cys656. The Ig-like C2-type domain occupies 604–663 (NTVNTLACPLLSNLATRLWLRNGAPVNASASCHVLPTGDLLLVGTQQLGEFQCWSLEEGF). Asn630 carries an N-linked (GlcNAc...) asparagine glycan. A helical transmembrane segment spans residues 718 to 738 (FLVMCTLFVLAVLLPVLFLLY). Residues 739–837 (RHRNSMKVFL…LGSEIRDSVV (99 aa)) are Cytoplasmic-facing. The disordered stretch occupies residues 767-805 (PETRPLNGLGPPSTPLDHRGYQSLSDSPPGSRVFTESEK). Ser793, Ser818, and Ser830 each carry phosphoserine.

Belongs to the semaphorin family.

The protein localises to the membrane. Functionally, inhibits axonal extension by providing local signals to specify territories inaccessible for growing axons. In Homo sapiens (Human), this protein is Semaphorin-4B.